The sequence spans 426 residues: Phytoene synthase 3, chloroplastic (426 aa).

The transit peptide at 1–52 (MMSTSRAVKSPACAARRRQWSADAPNRTATFLACRHGRRLGGGGGAPCSVRA) directs the protein to the chloroplast.

Belongs to the phytoene/squalene synthase family. Expressed in roots and endosperm.

Its subcellular location is the plastid. The protein resides in the chloroplast. It localises to the plastoglobule. It catalyses the reaction 2 (2E,6E,10E)-geranylgeranyl diphosphate = 15-cis-phytoene + 2 diphosphate. Catalyzes the conversion of geranylgeranyl diphosphate to phytoene. Mediates the first committed step in carotenoid biosynthesis. May play a role in regulating carotenoid flux in response to abiotic stress in roots. May control flux to carotenoid precursors that are required for abiotic stress-induced abscisic acid (ABA) formation in roots. The protein is Phytoene synthase 3, chloroplastic of Zea mays (Maize).